The following is a 491-amino-acid chain: Protein nucleotidyltransferase YdiU (491 aa).

Residues Gly-94, Gly-96, Arg-97, Lys-117, Asp-129, Gly-130, Arg-180, and Arg-187 each contribute to the ATP site. Asp-256 functions as the Proton acceptor in the catalytic mechanism. The Mg(2+) site is built by Asn-257 and Asp-266. Residue Asp-266 coordinates ATP.

It belongs to the SELO family. Mg(2+) serves as cofactor. Mn(2+) is required as a cofactor.

The catalysed reaction is L-seryl-[protein] + ATP = 3-O-(5'-adenylyl)-L-seryl-[protein] + diphosphate. It catalyses the reaction L-threonyl-[protein] + ATP = 3-O-(5'-adenylyl)-L-threonyl-[protein] + diphosphate. The enzyme catalyses L-tyrosyl-[protein] + ATP = O-(5'-adenylyl)-L-tyrosyl-[protein] + diphosphate. It carries out the reaction L-histidyl-[protein] + UTP = N(tele)-(5'-uridylyl)-L-histidyl-[protein] + diphosphate. The catalysed reaction is L-seryl-[protein] + UTP = O-(5'-uridylyl)-L-seryl-[protein] + diphosphate. It catalyses the reaction L-tyrosyl-[protein] + UTP = O-(5'-uridylyl)-L-tyrosyl-[protein] + diphosphate. Nucleotidyltransferase involved in the post-translational modification of proteins. It can catalyze the addition of adenosine monophosphate (AMP) or uridine monophosphate (UMP) to a protein, resulting in modifications known as AMPylation and UMPylation. This is Protein nucleotidyltransferase YdiU from Clostridium botulinum (strain Eklund 17B / Type B).